The chain runs to 502 residues: UPF0371 protein CLM_0396 (502 aa).

This sequence belongs to the UPF0371 family.

The polypeptide is UPF0371 protein CLM_0396 (Clostridium botulinum (strain Kyoto / Type A2)).